The following is a 384-amino-acid chain: MEMMSSSSSTTQVVSFRDMGMYEPFQQLSGWESPFKSDINNITSNQNNNQSSSTTLEVDARPEADDNNRVNYTSVYNNSLEAEPSSNNDQDEDRINDKMKRRLAQNREAARKSRLRKKAHVQQLEESRLKLSQLEQELVRARQQGLCVRNSSDTSYLGPAGNMNSGIAAFEMEYTHWLEEQNRRVSEIRTALQAHIGDIELKMLVDSCLNHYANLFRMKADAAKADVFFLMSGMWRTSTERFFQWIGGFRPSELLNVVMPYVEPLTDQQLLEVRNLQQSSQQAEEALSQGLDKLQQGLVESIAIQIKVVESVNHGAPMASAMENLQALESFVNQADHLRQQTLQQMSKILTTRQAARGLLALGEYFHRLRALSSLWAARPREHT.

Disordered stretches follow at residues Lys-36 to Val-70 and Tyr-76 to Ile-95. Positions Ile-39 to Thr-55 are enriched in low complexity. Over residues Val-58–Asn-68 the composition is skewed to basic and acidic residues. Residues Tyr-76–Asn-88 show a composition bias toward polar residues. One can recognise a bZIP domain in the interval Asn-96–Leu-138. Residues Lys-98–Lys-118 form a basic motif region. The Nuclear localization signal signature appears at Met-99–Asn-106. Residues Lys-117 to Gln-144 adopt a coiled-coil conformation. The interval Leu-124–Leu-138 is leucine-zipper. Residues Ile-167–Arg-379 form the DOG1 domain. Hexadecanoate-binding residues include Lys-219, Arg-236, and Phe-249. Positions Asp-267 to Gln-296 form a coiled coil.

It belongs to the bZIP family. As to quaternary structure, binds DNA as a dimer. Interacts with NPR3, NPR4 and sumoylated NPR1. Interacts with GRXC7/ROXY1. In terms of tissue distribution, expressed in the whole plant.

The protein resides in the nucleus. Transcriptional activator that binds specifically to the DNA sequence 5'-TGACG-3'. Recognizes ocs elements like the as-1 motif of the cauliflower mosaic virus 35S promoter. Binding to the as-1-like cis elements mediate auxin- and salicylic acid-inducible transcription. Required to induce the systemic acquired resistance (SAR) via the regulation of pathogenesis-related genes expression. Binding to the as-1 element of PR-1 promoter is salicylic acid-inducible and mediated by sumoylated NPR1. Could also bind to the Hex-motif (5'-TGACGTGG-3') another cis-acting element found in plant histone promoters. This chain is Transcription factor TGA3, found in Arabidopsis thaliana (Mouse-ear cress).